The chain runs to 494 residues: Probable malate:quinone oxidoreductase (494 aa).

Belongs to the MQO family. FAD is required as a cofactor.

The enzyme catalyses (S)-malate + a quinone = a quinol + oxaloacetate. Its pathway is carbohydrate metabolism; tricarboxylic acid cycle; oxaloacetate from (S)-malate (quinone route): step 1/1. This is Probable malate:quinone oxidoreductase from Micrococcus luteus (strain ATCC 4698 / DSM 20030 / JCM 1464 / CCM 169 / CCUG 5858 / IAM 1056 / NBRC 3333 / NCIMB 9278 / NCTC 2665 / VKM Ac-2230) (Micrococcus lysodeikticus).